A 97-amino-acid polypeptide reads, in one-letter code: Co-chaperonin GroES (97 aa).

Belongs to the GroES chaperonin family. As to quaternary structure, heptamer of 7 subunits arranged in a ring. Interacts with the chaperonin GroEL.

Its subcellular location is the cytoplasm. Functionally, together with the chaperonin GroEL, plays an essential role in assisting protein folding. The GroEL-GroES system forms a nano-cage that allows encapsulation of the non-native substrate proteins and provides a physical environment optimized to promote and accelerate protein folding. GroES binds to the apical surface of the GroEL ring, thereby capping the opening of the GroEL channel. The chain is Co-chaperonin GroES from Arthrobacter sp. (strain FB24).